The following is a 388-amino-acid chain: Mannitol-1-phosphate 5-dehydrogenase (388 aa).

Residue 5–16 (AIQFGGGNIGRG) coordinates NAD(+). The active site involves Lys-213.

Belongs to the mannitol dehydrogenase family. As to quaternary structure, monomer.

It catalyses the reaction D-mannitol 1-phosphate + NAD(+) = beta-D-fructose 6-phosphate + NADH + H(+). In terms of biological role, catalyzes the NAD(H)-dependent interconversion of D-fructose 6-phosphate and D-mannitol 1-phosphate in the mannitol metabolic pathway. This Aspergillus terreus (strain NIH 2624 / FGSC A1156) protein is Mannitol-1-phosphate 5-dehydrogenase (mpdA).